The following is a 152-amino-acid chain: Small integral membrane protein 28 (152 aa).

A helical membrane pass occupies residues phenylalanine 52–leucine 72. A disordered region spans residues proline 117 to valine 152.

It is found in the membrane. The chain is Small integral membrane protein 28 from Homo sapiens (Human).